Reading from the N-terminus, the 250-residue chain is Cell division protein FtsQ (250 aa).

Over 1-11 the chain is Cytoplasmic; that stretch reads MWNNVRQLNLA. Residues 12 to 32 traverse the membrane as a helical segment; the sequence is ASALYALLLLVLAAAGCYWLI. Topologically, residues 33-250 are periplasmic; sequence QRPAFALREI…FLTDTDKGKK (218 aa). The POTRA domain occupies 37–106; the sequence is FALREIRIDG…NALAVTLEEY (70 aa).

The protein belongs to the FtsQ/DivIB family. FtsQ subfamily. Part of a complex composed of FtsB, FtsL and FtsQ.

It is found in the cell inner membrane. Functionally, essential cell division protein. May link together the upstream cell division proteins, which are predominantly cytoplasmic, with the downstream cell division proteins, which are predominantly periplasmic. May control correct divisome assembly. This chain is Cell division protein FtsQ, found in Burkholderia pseudomallei (strain K96243).